Here is a 244-residue protein sequence, read N- to C-terminus: Carbonic anhydrase (244 aa).

A signal peptide spans 1 to 19; it reads MKGKFSIALMLSACFSASA. The Alpha-carbonic anhydrase domain occupies 23–244; the sequence is VHWGYEGSGD…QPLNGRIIIH (222 aa). A disulfide bridge links Cys-46 with Cys-199. The Proton acceptor role is filled by His-84. Zn(2+)-binding residues include His-109, His-111, and His-128. A substrate-binding site is contributed by 195 to 196; it reads TT.

The protein belongs to the alpha-carbonic anhydrase family. It depends on Zn(2+) as a cofactor.

The protein localises to the periplasm. It carries out the reaction hydrogencarbonate + H(+) = CO2 + H2O. Its function is as follows. Reversible hydration of carbon dioxide. The sequence is that of Carbonic anhydrase (cah) from Pectobacterium atrosepticum (strain SCRI 1043 / ATCC BAA-672) (Erwinia carotovora subsp. atroseptica).